Here is a 356-residue protein sequence, read N- to C-terminus: UDP-N-acetylglucosamine--N-acetylmuramyl-(pentapeptide) pyrophosphoryl-undecaprenol N-acetylglucosamine transferase (356 aa).

UDP-N-acetyl-alpha-D-glucosamine is bound by residues Ser-198 and Gln-289.

It belongs to the glycosyltransferase 28 family. MurG subfamily.

The protein localises to the cell membrane. It carries out the reaction Mur2Ac(oyl-L-Ala-gamma-D-Glu-L-Lys-D-Ala-D-Ala)-di-trans,octa-cis-undecaprenyl diphosphate + UDP-N-acetyl-alpha-D-glucosamine = beta-D-GlcNAc-(1-&gt;4)-Mur2Ac(oyl-L-Ala-gamma-D-Glu-L-Lys-D-Ala-D-Ala)-di-trans,octa-cis-undecaprenyl diphosphate + UDP + H(+). Its pathway is cell wall biogenesis; peptidoglycan biosynthesis. Functionally, cell wall formation. Catalyzes the transfer of a GlcNAc subunit on undecaprenyl-pyrophosphoryl-MurNAc-pentapeptide (lipid intermediate I) to form undecaprenyl-pyrophosphoryl-MurNAc-(pentapeptide)GlcNAc (lipid intermediate II). This Streptococcus thermophilus (strain CNRZ 1066) protein is UDP-N-acetylglucosamine--N-acetylmuramyl-(pentapeptide) pyrophosphoryl-undecaprenol N-acetylglucosamine transferase.